The chain runs to 361 residues: MDETTERPTVSFSYSNWISNIKKSTREAYEAKPFSHWILLFFSGAAMLIAFPASSLLSRLYFSNGGKSKWIISWVAVAGWPITCLILLPTYIFQKIKPTPLNTKLVLSYVVLGFLSAADNLMYAYAYAYLPASTSSLLASSSLAFSALFGYLIVKNPLNASVINSIVVITGAMAIIALDSSSDRYSYISNSQYFAGFFWDIMGSALHGLIFALSELLFVKLLGRRSFHVALEQQVMVSLTAFAFTTIGMVVSNDFQGMSHEAKSFKGGESLYTQVLVWSAVTFQLGVLGATAVLFLASTVMAGVLNAVRVPITSVAAVILMHDPMSGFKILSLVLTFWGFSSYIYGSSSSNSSTQASSSSS.

9 helical membrane-spanning segments follow: residues 37–57 (WILL…SSLL), 70–90 (WIIS…LLPT), 105–125 (LVLS…MYAY), 134–154 (TSSL…YLIV), 158–178 (LNAS…IIAL), 193–213 (YFAG…IFAL), 235–255 (VMVS…SNDF), 285–305 (LGVL…AGVL), and 315–335 (VAAV…SLVL). The EamA domain maps to 75-178 (VAVAGWPITC…ITGAMAIIAL (104 aa)).

The protein belongs to the purine permeases (TC 2.A.7.14) family.

The protein localises to the membrane. The chain is Probable purine permease 5 (PUP5) from Arabidopsis thaliana (Mouse-ear cress).